A 558-amino-acid polypeptide reads, in one-letter code: Urocanate hydratase (558 aa).

Residues 53–54, Q131, 177–179, E197, R202, 243–244, 264–268, 274–275, and Y323 each bind NAD(+); these read GG, GMG, NA, QTSAH, and YL. Residue C411 is part of the active site. An NAD(+)-binding site is contributed by G493.

The protein belongs to the urocanase family. It depends on NAD(+) as a cofactor.

Its subcellular location is the cytoplasm. It carries out the reaction 4-imidazolone-5-propanoate = trans-urocanate + H2O. Its pathway is amino-acid degradation; L-histidine degradation into L-glutamate; N-formimidoyl-L-glutamate from L-histidine: step 2/3. Functionally, catalyzes the conversion of urocanate to 4-imidazolone-5-propionate. This chain is Urocanate hydratase, found in Idiomarina loihiensis (strain ATCC BAA-735 / DSM 15497 / L2-TR).